Reading from the N-terminus, the 659-residue chain is Putative cysteine-rich receptor-like protein kinase 39 (659 aa).

Residues Met-1 to Ala-27 form the signal peptide. 2 Gnk2-homologous domains span residues Val-28 to Thr-134 and Pro-142 to Phe-253. Over Val-28–Gly-289 the chain is Extracellular. Asn-38, Asn-64, Asn-122, Asn-131, Asn-157, Asn-170, Asn-259, and Asn-274 each carry an N-linked (GlcNAc...) asparagine glycan. The helical transmembrane segment at Gly-290 to Ile-310 threads the bilayer. Residues Lys-311–Arg-659 are Cytoplasmic-facing. The Protein kinase domain occupies Phe-353–Leu-619. ATP-binding positions include Leu-359–Val-367 and Lys-381. Tyr-426 carries the post-translational modification Phosphotyrosine. Asp-478 serves as the catalytic Proton acceptor. Ser-482 carries the post-translational modification Phosphoserine. Position 518 is a phosphothreonine (Thr-518). Residue Tyr-526 is modified to Phosphotyrosine.

It belongs to the protein kinase superfamily. Ser/Thr protein kinase family. CRK subfamily.

Its subcellular location is the membrane. It carries out the reaction L-seryl-[protein] + ATP = O-phospho-L-seryl-[protein] + ADP + H(+). The catalysed reaction is L-threonyl-[protein] + ATP = O-phospho-L-threonyl-[protein] + ADP + H(+). The chain is Putative cysteine-rich receptor-like protein kinase 39 (CRK39) from Arabidopsis thaliana (Mouse-ear cress).